Reading from the N-terminus, the 118-residue chain is Large ribosomal subunit protein bL19 (118 aa).

The protein belongs to the bacterial ribosomal protein bL19 family.

In terms of biological role, this protein is located at the 30S-50S ribosomal subunit interface and may play a role in the structure and function of the aminoacyl-tRNA binding site. The polypeptide is Large ribosomal subunit protein bL19 (Helicobacter pylori (strain P12)).